The following is a 188-amino-acid chain: Large ribosomal subunit protein uL6 (188 aa).

Belongs to the universal ribosomal protein uL6 family.

This Tetrahymena thermophila (strain SB210) protein is Large ribosomal subunit protein uL6 (RPL9).